We begin with the raw amino-acid sequence, 95 residues long: Protein TusB (95 aa).

This sequence belongs to the DsrH/TusB family. Heterohexamer, formed by a dimer of trimers. The hexameric TusBCD complex contains 2 copies each of TusB, TusC and TusD. The TusBCD complex interacts with TusE.

The protein localises to the cytoplasm. Part of a sulfur-relay system required for 2-thiolation of 5-methylaminomethyl-2-thiouridine (mnm(5)s(2)U) at tRNA wobble positions. The chain is Protein TusB from Sodalis glossinidius (strain morsitans).